Reading from the N-terminus, the 1129-residue chain is Kinesin-like protein KIP1 (1129 aa).

Residues 1 to 49 (MLEQAEKLMKRNSSGAMSAPQSKPLARSRSSTMPTTTQKRVRSSQQSEG) are disordered. Composition is skewed to polar residues over residues 11-21 (RNSSGAMSAPQ) and 28-48 (SRSS…QQSE). The region spanning 54 to 417 (NIKVYVRCRS…LEYATRAKSI (364 aa)) is the Kinesin motor domain. 139–146 (GQTGTGKT) provides a ligand contact to ATP. Coiled coils occupy residues 422–513 (QVNQ…ELDV), 681–765 (LEKE…QKIV), and 919–948 (DDQR…TLVN).

The protein belongs to the TRAFAC class myosin-kinesin ATPase superfamily. Kinesin family. BimC subfamily.

It localises to the cytoplasm. Its subcellular location is the cytoskeleton. The protein localises to the spindle. Functionally, required for assembly of the mitotic spindle. Interacts with spindle microtubules to produce an outwardly directed force acting upon the poles. Following spindle assembly, CIN8 and KIP1 apparently act to oppose a force that draws separated poles back together. This force seems to be mediate by KAR3. The sequence is that of Kinesin-like protein KIP1 (KIP1) from Eremothecium gossypii (strain ATCC 10895 / CBS 109.51 / FGSC 9923 / NRRL Y-1056) (Yeast).